The following is a 397-amino-acid chain: Cell division protein DivIB (397 aa).

Residues 1–138 are Cytoplasmic-facing; the sequence is MTTKDKGDQK…RIERIHLYRA (138 aa). Basic and acidic residues predominate over residues 24–37; it reads QEYLEKKSQEKASE. Positions 24–115 are disordered; that stretch reads QEYLEKKSQE…DRTEKFIGQA (92 aa). Positions 74–103 are enriched in acidic residues; sequence ASDDDETNESEESEDVEEPEEENIEESSDV. Residues 139 to 159 form a helical membrane-spanning segment; sequence LPVLVISSLLILLSLYFITPL. In terms of domain architecture, POTRA spans 160 to 231; that stretch reads GSLKNLVVTG…ITFKIQVTEY (72 aa). Residues 160-397 are Extracellular-facing; that stretch reads GSLKNLVVTG…PSDVTDETNN (238 aa). The interval 360-397 is disordered; it reads LVQKEEQDQEQEKEESSEETVPGETEAAPSDVTDETNN. Over residues 366-377 the composition is skewed to acidic residues; the sequence is QDQEQEKEESSE.

It belongs to the FtsQ/DivIB family. DivIB subfamily.

Its subcellular location is the cell membrane. In terms of biological role, cell division protein that may be involved in stabilizing or promoting the assembly of the division complex. This is Cell division protein DivIB from Streptococcus gordonii (strain Challis / ATCC 35105 / BCRC 15272 / CH1 / DL1 / V288).